Reading from the N-terminus, the 461-residue chain is Elongation factor 1-alpha (461 aa).

The tr-type G domain occupies 5–242; the sequence is KIHINIVVIG…DAILPPSRPT (238 aa). The tract at residues 14-21 is G1; sequence GHVDSGKS. 14–21 contacts GTP; the sequence is GHVDSGKS. A G2 region spans residues 70–74; that stretch reads GITID. The tract at residues 91-94 is G3; it reads DAPG. Residues 91-95 and 153-156 contribute to the GTP site; these read DAPGH and NKMD. Residues 153–156 are G4; the sequence is NKMD. A G5 region spans residues 194-196; the sequence is SGW. 5-glutamyl glycerylphosphorylethanolamine is present on residues Glu-301 and Glu-374.

This sequence belongs to the TRAFAC class translation factor GTPase superfamily. Classic translation factor GTPase family. EF-Tu/EF-1A subfamily.

The protein localises to the cytoplasm. This protein promotes the GTP-dependent binding of aminoacyl-tRNA to the A-site of ribosomes during protein biosynthesis. In Apis mellifera (Honeybee), this protein is Elongation factor 1-alpha.